The sequence spans 937 residues: Aconitate hydratase A (937 aa).

The interval 410–450 (MANEGGFQPGSTSDLDNYNASWPGEGESAAANAEGRPSNPV) is disordered. Polar residues predominate over residues 418 to 429 (PGSTSDLDNYNA). Positions 433-444 (GEGESAAANAEG) are enriched in low complexity. Residues C475, C541, and C544 each coordinate [4Fe-4S] cluster.

The protein belongs to the aconitase/IPM isomerase family. In terms of assembly, monomer. It depends on [4Fe-4S] cluster as a cofactor.

The enzyme catalyses citrate = D-threo-isocitrate. It catalyses the reaction (2S,3R)-3-hydroxybutane-1,2,3-tricarboxylate = 2-methyl-cis-aconitate + H2O. The protein operates within carbohydrate metabolism; tricarboxylic acid cycle; isocitrate from oxaloacetate: step 2/2. It functions in the pathway organic acid metabolism; propanoate degradation. Functionally, involved in the catabolism of short chain fatty acids (SCFA) via the tricarboxylic acid (TCA)(acetyl degradation route) and probably via the 2-methylcitrate cycle I (propionate degradation route). Catalyzes the reversible isomerization of citrate to isocitrate via cis-aconitate. Could catalyze the hydration of 2-methyl-cis-aconitate to yield (2R,3S)-2-methylisocitrate. The apo form of AcnA functions as a RNA-binding regulatory protein. This chain is Aconitate hydratase A (acn), found in Corynebacterium efficiens (strain DSM 44549 / YS-314 / AJ 12310 / JCM 11189 / NBRC 100395).